A 110-amino-acid polypeptide reads, in one-letter code: ORC1-type DNA replication protein 3 (110 aa).

8-12 lines the ATP pocket; that stretch reads SGKSL.

Belongs to the CDC6/cdc18 family.

Its function is as follows. Involved in regulation of DNA replication. This is ORC1-type DNA replication protein 3 (orc3) from Halobacterium salinarum (strain ATCC 700922 / JCM 11081 / NRC-1) (Halobacterium halobium).